A 593-amino-acid chain; its full sequence is Arginine--tRNA ligase (593 aa).

The 'HIGH' region signature appears at 138 to 148; it reads ANPTGPLHVGH.

Belongs to the class-I aminoacyl-tRNA synthetase family. As to quaternary structure, monomer.

The protein resides in the cytoplasm. The catalysed reaction is tRNA(Arg) + L-arginine + ATP = L-arginyl-tRNA(Arg) + AMP + diphosphate. This is Arginine--tRNA ligase from Burkholderia vietnamiensis (strain G4 / LMG 22486) (Burkholderia cepacia (strain R1808)).